The following is a 400-amino-acid chain: Phosphoglycerate kinase (400 aa).

Substrate is bound by residues 21 to 23 (DLN), R36, 59 to 62 (HLGR), R114, and R147. Residues K202, E329, and 355–358 (GGDT) each bind ATP.

This sequence belongs to the phosphoglycerate kinase family. Monomer.

Its subcellular location is the cytoplasm. It carries out the reaction (2R)-3-phosphoglycerate + ATP = (2R)-3-phospho-glyceroyl phosphate + ADP. Its pathway is carbohydrate degradation; glycolysis; pyruvate from D-glyceraldehyde 3-phosphate: step 2/5. This is Phosphoglycerate kinase from Psychrobacter cryohalolentis (strain ATCC BAA-1226 / DSM 17306 / VKM B-2378 / K5).